Reading from the N-terminus, the 40-residue chain is AVANCGQVVSYLAPCISYAMGRVSAPGGGCCSGVRGLNAA.

Belongs to the plant LTP family. Post-translationally, phosphorylated by Ca(2+)-dependent protein kinase.

Functionally, plant non-specific lipid-transfer proteins transfer phospholipids as well as galactolipids across membranes. May play a role in wax or cutin deposition in the cell walls of expanding epidermal cells and certain secretory tissues. The chain is Probable non-specific lipid-transfer protein from Triticum aestivum (Wheat).